The primary structure comprises 104 residues: Gastrin (104 aa).

Positions 1–21 (MQRLCAHALILVLALAAFCEA) are cleaved as a signal peptide. The propeptide occupies 22–58 (SWKPHSQLQDAPVAPGANKGQEPLRMDRLGPASHPRR). The interval 26–70 (HSQLQDAPVAPGANKGQEPLRMDRLGPASHPRRQLGLQDPPHMVA) is disordered. Tyrosine 87 is modified (sulfotyrosine). A Phenylalanine amide modification is found at phenylalanine 92. Residue serine 96 is modified to Phosphoserine. A propeptide spanning residues 96–104 (SAEEGDQHP) is cleaved from the precursor.

It belongs to the gastrin/cholecystokinin family. In terms of processing, sulfation enhances proteolytic processing, and blocks peptide degradation. Levels of sulfation differ between proteolytically-cleaved gastrins and between tissues.

Its subcellular location is the secreted. Its function is as follows. Gastrin stimulates the stomach mucosa to produce and secrete hydrochloric acid and the pancreas to secrete its digestive enzymes. It also stimulates smooth muscle contraction and increases blood circulation and water secretion in the stomach and intestine. The chain is Gastrin (GAST) from Ovis aries (Sheep).